Here is a 705-residue protein sequence, read N- to C-terminus: SPbeta prophage-derived sublancin-168-processing and transport ATP-binding protein SunT (705 aa).

Positions 12–138 (QFNSHDCGLA…SKFTNFILEI (127 aa)) constitute a Peptidase C39 domain. Cysteine 18 is a catalytic residue. The next 6 helical transmembrane spans lie at 167–187 (IVFV…AGSF), 205–225 (LITI…FDFV), 281–301 (ANFV…VILY), 306–326 (ILFL…ILFF), 388–408 (VISN…IILW), and 418–438 (SMSL…LSSL). The 283-residue stretch at 168-450 (VFVILLTSLF…ILSMQSDLQQ (283 aa)) folds into the ABC transmembrane type-1 domain. The 223-residue stretch at 483 to 705 (IKTVNLNIGA…SYSENKEYSI (223 aa)) folds into the ABC transporter domain. Residue 516–523 (GESGTGKS) participates in ATP binding.

The protein belongs to the ABC transporter superfamily. SunT family. In terms of assembly, homodimer.

The protein localises to the cell membrane. Its function is as follows. SunT (TC 3.A.1.112.4) is required for production of the lantibiotic sublancin-168, probably by both processing the signal peptide and exporting the resulting mature lantibiotic. The sequence is that of SPbeta prophage-derived sublancin-168-processing and transport ATP-binding protein SunT (sunT) from Bacillus subtilis (strain 168).